Consider the following 301-residue polypeptide: GTPase Era (301 aa).

The 167-residue stretch at Lys-7–Glu-173 folds into the Era-type G domain. A G1 region spans residues Gly-15–Ser-22. GTP is bound at residue Gly-15 to Ser-22. The tract at residues Gln-41 to Asn-45 is G2. The interval Asp-62 to Gly-65 is G3. GTP contacts are provided by residues Asp-62–Ile-66 and Asn-123–Asp-126. The interval Asn-123–Asp-126 is G4. The tract at residues Ile-152–Ala-154 is G5. Residues Thr-204–His-281 form the KH type-2 domain.

The protein belongs to the TRAFAC class TrmE-Era-EngA-EngB-Septin-like GTPase superfamily. Era GTPase family. As to quaternary structure, monomer.

The protein localises to the cytoplasm. It localises to the cell membrane. Functionally, an essential GTPase that binds both GDP and GTP, with rapid nucleotide exchange. Plays a role in 16S rRNA processing and 30S ribosomal subunit biogenesis and possibly also in cell cycle regulation and energy metabolism. This chain is GTPase Era, found in Lactobacillus helveticus (strain DPC 4571).